The sequence spans 274 residues: Rhamnulose-1-phosphate aldolase (274 aa).

Glutamate 117 is an active-site residue. 3 residues coordinate Zn(2+): histidine 141, histidine 143, and histidine 212.

This sequence belongs to the aldolase class II family. RhaD subfamily. In terms of assembly, homotetramer. Zn(2+) serves as cofactor.

The protein resides in the cytoplasm. The enzyme catalyses L-rhamnulose 1-phosphate = (S)-lactaldehyde + dihydroxyacetone phosphate. Its pathway is carbohydrate degradation; L-rhamnose degradation; glycerone phosphate from L-rhamnose: step 3/3. Catalyzes the reversible cleavage of L-rhamnulose-1-phosphate to dihydroxyacetone phosphate (DHAP) and L-lactaldehyde. The chain is Rhamnulose-1-phosphate aldolase from Shigella boydii serotype 4 (strain Sb227).